The primary structure comprises 562 residues: Ycf55-like protein (562 aa).

Residues 7–125 (TIVIVDEDPV…DLVTGLKQVH (119 aa)) enclose the Response regulatory domain.

It belongs to the ycf55 family.

In Synechocystis sp. (strain ATCC 27184 / PCC 6803 / Kazusa), this protein is Ycf55-like protein.